The following is a 616-amino-acid chain: Chaperone protein HscA (616 aa).

This sequence belongs to the heat shock protein 70 family.

Chaperone involved in the maturation of iron-sulfur cluster-containing proteins. Has a low intrinsic ATPase activity which is markedly stimulated by HscB. Involved in the maturation of IscU. This chain is Chaperone protein HscA, found in Serratia proteamaculans (strain 568).